We begin with the raw amino-acid sequence, 142 residues long: Large ribosomal subunit protein uL13 (142 aa).

The protein belongs to the universal ribosomal protein uL13 family. As to quaternary structure, part of the 50S ribosomal subunit.

Its function is as follows. This protein is one of the early assembly proteins of the 50S ribosomal subunit, although it is not seen to bind rRNA by itself. It is important during the early stages of 50S assembly. The polypeptide is Large ribosomal subunit protein uL13 (Citrifermentans bemidjiense (strain ATCC BAA-1014 / DSM 16622 / JCM 12645 / Bem) (Geobacter bemidjiensis)).